The following is an 830-amino-acid chain: V-type proton ATPase 116 kDa subunit a 3 (830 aa).

The Cytoplasmic segment spans residues 1 to 385; the sequence is MGSMFRSEEV…DAYGVGRYQE (385 aa). The interval 139-158 is disordered; sequence QLAAAHTDGASERTPLLQAP. A helical membrane pass occupies residues 386–404; the sequence is VNPAPYTIITFPFLFAVMF. The Vacuolar portion of the chain corresponds to 405 to 406; the sequence is GD. Residues 407-423 traverse the membrane as a helical segment; that stretch reads VGHGLLMFLFALAMVLA. At 424 to 438 the chain is on the cytoplasmic side; the sequence is ENRPAVKAAQNEIWQ. A helical membrane pass occupies residues 439 to 468; sequence TFFRGRYLLLLMGLFSIYTGFIYNECFSRA. Residues 469-532 lie on the Vacuolar side of the membrane; sequence TSIFPSGWSV…AANHLSFLNS (64 aa). A helical transmembrane segment spans residues 533-552; sequence FKMKMSVILGVVHMAFGVVL. Topologically, residues 553–570 are cytoplasmic; the sequence is GVFNHVHFGQRHRLLLET. The chain crosses the membrane as a helical span at residues 571–591; the sequence is LPELTFLLGLFGYLVFLVIYK. Residues 592-635 are Vacuolar-facing; the sequence is WLCVWAARAASAPSILIHFINMFLFSHSPSNRLLYPRQEVVQAT. The helical transmembrane segment at 636 to 655 threads the bilayer; the sequence is LVVLALAMVPILLLGTPLHL. Residues 656 to 720 lie on the Cytoplasmic side of the membrane; it reads LHRHRRRLRR…EVLMHQAIHT (65 aa). Positions 681 to 701 are disordered; it reads LPDASVNGWSSDEEKAGGLDD. The chain crosses the membrane as a helical span at residues 721-745; that stretch reads IEFCLGCVSNTASYLRLWALSLAHA. At 746 to 766 the chain is on the vacuolar side; it reads QLSEVLWAMVMRIGLGLGREV. The helical transmembrane segment at 767–807 threads the bilayer; sequence GVAAVVLVPIFAAFAVMTVAILLVMEGLSAFLHALRLHWVE. Residues 808 to 830 are Cytoplasmic-facing; that stretch reads FQNKFYSGTGYKLSPFTFAATDD.

The protein belongs to the V-ATPase 116 kDa subunit family. As to quaternary structure, V-ATPase is a heteromultimeric enzyme made up of two complexes: the ATP-hydrolytic V1 complex and the proton translocation V0 complex. The V1 complex consists of three catalytic AB heterodimers that form a heterohexamer, three peripheral stalks each consisting of EG heterodimers, one central rotor including subunits D and F, and the regulatory subunits C and H. The proton translocation complex V0 consists of the proton transport subunit a, a ring of proteolipid subunits c9c'', rotary subunit d, subunits e and f, and the accessory subunits ATP6AP1/Ac45 and ATP6AP2/PRR. As to expression, isoform long is highly expressed in osteoclastomas. Isoform short is highly expressed in thymus.

It localises to the membrane. Subunit of the V0 complex of vacuolar(H+)-ATPase (V-ATPase), a multisubunit enzyme composed of a peripheral complex (V1) that hydrolyzes ATP and a membrane integral complex (V0) that translocates protons. V-ATPase is responsible for acidifying and maintaining the pH of intracellular compartments and in some cell types, is targeted to the plasma membrane, where it is responsible for acidifying the extracellular environment. Seems to be directly involved in T-cell activation. The protein is V-type proton ATPase 116 kDa subunit a 3 (TCIRG1) of Homo sapiens (Human).